Consider the following 110-residue polypeptide: Phosphoribosyl-ATP pyrophosphatase (110 aa).

The protein belongs to the PRA-PH family.

The protein localises to the cytoplasm. The catalysed reaction is 1-(5-phospho-beta-D-ribosyl)-ATP + H2O = 1-(5-phospho-beta-D-ribosyl)-5'-AMP + diphosphate + H(+). It functions in the pathway amino-acid biosynthesis; L-histidine biosynthesis; L-histidine from 5-phospho-alpha-D-ribose 1-diphosphate: step 2/9. This is Phosphoribosyl-ATP pyrophosphatase (hisE) from Azotobacter chroococcum mcd 1.